The following is a 324-amino-acid chain: o-succinylbenzoate synthase (324 aa).

Lysine 135 functions as the Proton donor in the catalytic mechanism. Mg(2+)-binding residues include aspartate 163, glutamate 192, and aspartate 215. Catalysis depends on lysine 237, which acts as the Proton acceptor.

This sequence belongs to the mandelate racemase/muconate lactonizing enzyme family. MenC type 1 subfamily. A divalent metal cation is required as a cofactor.

The catalysed reaction is (1R,6R)-6-hydroxy-2-succinyl-cyclohexa-2,4-diene-1-carboxylate = 2-succinylbenzoate + H2O. The protein operates within quinol/quinone metabolism; 1,4-dihydroxy-2-naphthoate biosynthesis; 1,4-dihydroxy-2-naphthoate from chorismate: step 4/7. Its pathway is quinol/quinone metabolism; menaquinone biosynthesis. Converts 2-succinyl-6-hydroxy-2,4-cyclohexadiene-1-carboxylate (SHCHC) to 2-succinylbenzoate (OSB). This chain is o-succinylbenzoate synthase, found in Aliivibrio fischeri (strain MJ11) (Vibrio fischeri).